Consider the following 121-residue polypeptide: Urotensin-2 (121 aa).

A signal peptide spans 1–19 (MSKLVPCLLLLGCLGLLFA). The propeptide occupies 20–106 (LPVPDSRKEP…HLLARIKKPY (87 aa)). An intrachain disulfide couples Cys115 to Cys120.

Belongs to the urotensin-2 family.

It is found in the secreted. Its function is as follows. Highly potent vasoconstrictor. The polypeptide is Urotensin-2 (UTS2) (Sus scrofa (Pig)).